A 234-amino-acid polypeptide reads, in one-letter code: Cytidylate kinase (234 aa).

An ATP-binding site is contributed by 10-18 (GYSACGKST).

This sequence belongs to the cytidylate kinase family. Type 1 subfamily.

It localises to the cytoplasm. It catalyses the reaction CMP + ATP = CDP + ADP. It carries out the reaction dCMP + ATP = dCDP + ADP. This chain is Cytidylate kinase, found in Cytophaga hutchinsonii (strain ATCC 33406 / DSM 1761 / CIP 103989 / NBRC 15051 / NCIMB 9469 / D465).